A 650-amino-acid polypeptide reads, in one-letter code: Chaperone protein DnaK (650 aa).

The residue at position 200 (Thr200) is a Phosphothreonine; by autocatalysis. Residues 614–635 (AGAAGAAGAAEGAAHAGGAQQA) form a disordered region.

This sequence belongs to the heat shock protein 70 family.

Its function is as follows. Acts as a chaperone. In Burkholderia lata (strain ATCC 17760 / DSM 23089 / LMG 22485 / NCIMB 9086 / R18194 / 383), this protein is Chaperone protein DnaK.